Reading from the N-terminus, the 136-residue chain is Aspartate 1-decarboxylase (136 aa).

The active-site Schiff-base intermediate with substrate; via pyruvic acid is the Ser25. Position 25 is a pyruvic acid (Ser) (Ser25). Substrate is bound at residue Thr57. Tyr58 functions as the Proton donor in the catalytic mechanism. 73 to 75 (GAA) is a binding site for substrate.

It belongs to the PanD family. As to quaternary structure, heterooctamer of four alpha and four beta subunits. Pyruvate serves as cofactor. In terms of processing, is synthesized initially as an inactive proenzyme, which is activated by self-cleavage at a specific serine bond to produce a beta-subunit with a hydroxyl group at its C-terminus and an alpha-subunit with a pyruvoyl group at its N-terminus.

The protein resides in the cytoplasm. It carries out the reaction L-aspartate + H(+) = beta-alanine + CO2. It participates in cofactor biosynthesis; (R)-pantothenate biosynthesis; beta-alanine from L-aspartate: step 1/1. Catalyzes the pyruvoyl-dependent decarboxylation of aspartate to produce beta-alanine. This is Aspartate 1-decarboxylase from Corynebacterium efficiens (strain DSM 44549 / YS-314 / AJ 12310 / JCM 11189 / NBRC 100395).